Here is an 833-residue protein sequence, read N- to C-terminus: Leucine--tRNA ligase (833 aa).

Positions P41 to H52 match the 'HIGH' region motif. Positions K610 to S614 match the 'KMSKS' region motif. K613 contacts ATP.

This sequence belongs to the class-I aminoacyl-tRNA synthetase family.

The protein resides in the cytoplasm. It carries out the reaction tRNA(Leu) + L-leucine + ATP = L-leucyl-tRNA(Leu) + AMP + diphosphate. The polypeptide is Leucine--tRNA ligase (Streptococcus pyogenes serotype M3 (strain ATCC BAA-595 / MGAS315)).